A 712-amino-acid polypeptide reads, in one-letter code: Dipeptidyl-peptidase 7 (712 aa).

Positions 1–23 (MQMKLKSILLGAALLLGASGVAK) are cleaved as a signal peptide. The active-site Charge relay system is His-89. Positions 136 to 173 (TDKVEGQLKGITDEMERLRKAQEVCQELAKKENADENQ) form a coiled coil. Catalysis depends on charge relay system residues Asp-225 and Ser-648.

Belongs to the peptidase S46 family.

Its subcellular location is the cell outer membrane. Its activity is regulated as follows. Is inhibited in vitro by typical serine protease inhibitors like diisopropyl fluorophosphate, Pefablock, and 3,4-dichloroisocoumarin, but not by typical cysteine class inhibitors such as E-64 or iododoacetic acid. Catalyzes the removal of dipeptides from the N-terminus of oligopeptides. Shows a broad specificity for both aliphatic and aromatic residues in the P1 position, with glycine or proline being not acceptable in this position. Most potently cleaves the synthetic substrate Met-Leu-methylcoumaryl-7-amide (Met-Leu-MCA), Leu-Arg-MCA and Lys-Ala-MCA to a lesser extent. Is likely involved in amino acid metabolism and bacterial growth of asaccharolytic P.gingivalis, that utilizes amino acids from extracellular proteinaceous nutrients as energy and carbon sources. The sequence is that of Dipeptidyl-peptidase 7 from Porphyromonas gingivalis (strain ATCC 33277 / DSM 20709 / CIP 103683 / JCM 12257 / NCTC 11834 / 2561).